Here is a 962-residue protein sequence, read N- to C-terminus: Translation initiation factor IF-2 (962 aa).

3 disordered regions span residues 122–263 (EVGV…EPAR), 293–327 (TEEV…TRRK), and 341–362 (IAAQ…AKEP). Over residues 156-173 (AVEPQTVVPPVAAPAAEV) the composition is skewed to low complexity. Over residues 188 to 202 (KPPEEKETKVKHAEP) the composition is skewed to basic and acidic residues. Basic residues predominate over residues 244 to 256 (RPKKAKKRRRKKV). 2 stretches are compositionally biased toward basic and acidic residues: residues 308 to 327 (RPEE…TRRK) and 344 to 362 (QDDR…AKEP). A tr-type G domain is found at 455-624 (RRPPVITVMG…LLQAELLELK (170 aa)). Residues 464-471 (GHVDHGKT) form a G1 region. Residue 464–471 (GHVDHGKT) coordinates GTP. The G2 stretch occupies residues 489 to 493 (GITQH). The interval 510–513 (DTPG) is G3. Residues 510 to 514 (DTPGH) and 564 to 567 (NKVD) each bind GTP. The tract at residues 564–567 (NKVD) is G4. Positions 600–602 (SAK) are G5.

Belongs to the TRAFAC class translation factor GTPase superfamily. Classic translation factor GTPase family. IF-2 subfamily.

The protein localises to the cytoplasm. In terms of biological role, one of the essential components for the initiation of protein synthesis. Protects formylmethionyl-tRNA from spontaneous hydrolysis and promotes its binding to the 30S ribosomal subunits. Also involved in the hydrolysis of GTP during the formation of the 70S ribosomal complex. The sequence is that of Translation initiation factor IF-2 from Syntrophobacter fumaroxidans (strain DSM 10017 / MPOB).